The following is a 470-amino-acid chain: MSNPTPTGVVTRFAPSPTGFLHIGGARTALFNWLYARHTGGKFLIRVEDTDRERSTEAAVAAIFEGLDWLGLKSDDEVIFQHTRAPRHVEVVHELLAKGRAYRCWMSIEELEVAREKARAEGRAIRSPWRDAPEGDLSAPHVIRFKGPLDGETLVNDLVKGPVTFKNIELDDLVLLRADGAPTYNLAVVVDDHDMGVTHVIRGDDHLNNAARQTLIYQAMDWAVPAFAHIPLIHGPDGAKLSKRHGAQAVGEFADLGYIPEGMRNYLARLGWGHGDDEVFTDEQAISWFDVADVVKAPARLDWAKLNHINAQHLRKADDARLTALALAAAETRGEPLPADAAERIARTVPEVKEGAKTILELVDHCAFALKTRPLALEEKTQKQLTEETVERLKRLRDQLAAAPDFDAATLETVLKSFAESEGVGFGKFGPALRGVLTGGAQAPDLNKTMAALSRDEAIGRLDDALAPRA.

Positions 15–25 (PSPTGFLHIGG) match the 'HIGH' region motif. The short motif at 240–244 (KLSKR) is the 'KMSKS' region element. Lys-243 is an ATP binding site.

Belongs to the class-I aminoacyl-tRNA synthetase family. Glutamate--tRNA ligase type 1 subfamily. Monomer.

It is found in the cytoplasm. The catalysed reaction is tRNA(Glu) + L-glutamate + ATP = L-glutamyl-tRNA(Glu) + AMP + diphosphate. Functionally, catalyzes the attachment of glutamate to tRNA(Glu) in a two-step reaction: glutamate is first activated by ATP to form Glu-AMP and then transferred to the acceptor end of tRNA(Glu). This chain is Glutamate--tRNA ligase, found in Caulobacter vibrioides (strain ATCC 19089 / CIP 103742 / CB 15) (Caulobacter crescentus).